Consider the following 247-residue polypeptide: F-box and leucine-rich protein 22 (247 aa).

The region spanning 6–52 is the F-box domain; it reads TMHITQLNRECLLHLFSFLDKDSRKSLARTCSQLHDVFEDPALWSLL. 2 disordered regions span residues 124 to 154 and 173 to 247; these read SPRRREAPAPSSGTPIAVGPKSPRWGGPDHS and GLGS…AFPQ. Residues 184–200 show a composition bias toward pro residues; that stretch reads ETPPAPGVSWGPPPPGA.

In terms of assembly, directly interacts with SKP1 and CUL1. Enriched in cardiac muscle.

The protein localises to the cytoplasm. Its subcellular location is the myofibril. It localises to the sarcomere. The protein resides in the z line. The protein operates within protein modification; protein ubiquitination. Functionally, substrate-recognition component of the SCF (SKP1-CUL1-F-box protein)-type E3 ubiquitin ligase complex. Promotes ubiquitination of sarcomeric proteins alpha-actinin-2 (ACTN2) and filamin-C (FLNC). The polypeptide is F-box and leucine-rich protein 22 (FBXL22) (Homo sapiens (Human)).